Consider the following 692-residue polypeptide: Peroxisomal primary amine oxidase (692 aa).

Positions 1-22 (MERLRQIASQATAASAAPARPA) are enriched in low complexity. The interval 1–26 (MERLRQIASQATAASAAPARPAHPLD) is disordered. Asn-243 carries N-linked (GlcNAc...) asparagine glycosylation. Substrate is bound at residue 317–328 (ALDIGEYGAGYM). The active-site Proton acceptor is Asp-319. Residues Cys-338 and Cys-364 are joined by a disulfide bond. 402–407 (AANYEY) is a substrate binding site. Tyr-405 (schiff-base intermediate with substrate; via topaquinone) is an active-site residue. Residue Tyr-405 is modified to 2',4',5'-topaquinone. Cu cation is bound by residues His-456 and His-458. The Mn(2+) site is built by Asp-465, Asp-613, and Ile-614. His-624 contributes to the Cu cation binding site.

Belongs to the copper/topaquinone oxidase family. Homodimer. It depends on Cu cation as a cofactor. Requires Zn(2+) as cofactor. The cofactor is L-topaquinone. Mn(2+) serves as cofactor. In terms of processing, topaquinone (TPQ) is generated by copper-dependent autoxidation of a specific tyrosyl residue.

It localises to the peroxisome. It catalyses the reaction a primary methyl amine + O2 + H2O = an aldehyde + H2O2 + NH4(+). In Pichia angusta (Yeast), this protein is Peroxisomal primary amine oxidase (AMO).